Here is a 1217-residue protein sequence, read N- to C-terminus: ATP-dependent helicase/nuclease subunit A (1217 aa).

A UvrD-like helicase ATP-binding domain is found at valine 10–arginine 475. Alanine 31–threonine 38 is a binding site for ATP. Residues lysine 476–glycine 786 form the UvrD-like helicase C-terminal domain.

It belongs to the helicase family. AddA subfamily. As to quaternary structure, heterodimer of AddA and AddB/RexB. It depends on Mg(2+) as a cofactor.

It carries out the reaction Couples ATP hydrolysis with the unwinding of duplex DNA by translocating in the 3'-5' direction.. It catalyses the reaction ATP + H2O = ADP + phosphate + H(+). The heterodimer acts as both an ATP-dependent DNA helicase and an ATP-dependent, dual-direction single-stranded exonuclease. Recognizes the chi site generating a DNA molecule suitable for the initiation of homologous recombination. The AddA nuclease domain is required for chi fragment generation; this subunit has the helicase and 3' -&gt; 5' nuclease activities. The chain is ATP-dependent helicase/nuclease subunit A from Staphylococcus aureus (strain MSSA476).